A 90-amino-acid polypeptide reads, in one-letter code: Large ribosomal subunit protein bL27 (90 aa).

Residues 1–20 (MAHKKAGGSSRNGRDSAGKR) form a disordered region.

This sequence belongs to the bacterial ribosomal protein bL27 family.

This chain is Large ribosomal subunit protein bL27, found in Rhodopseudomonas palustris (strain ATCC BAA-98 / CGA009).